Consider the following 436-residue polypeptide: MSATTQEKGLNYKVKDLSQAEWGRQEIILAEKEMPGLMALRQEYKGKKPLAGARIAGSLHMTIQTAVLIETLTELGAEVRWSSCNIFSTQDHAAAAIAKAGVPVFAWKGETEEEYWWCIEQTLFFGDKGPNMILDDGGDLTAYVHEKYPKLLSEIRGISEETTTGVKSLYKLLKKGELKVPAFNVNDSVTKSKFDNLYGCRESLADGIKRATDVMLAGKVALVCGFGDVGKGSAASLRNFGARVIVTEIDPICALQASMEGYQVLRVEDIIEQVDIVVTATGNDDIITLEHMKAMKDGAILCNIGHFDTEIQMSRLNSEKGVTKKEIKPQVDKYTFPDGKSIVVLAEGRLVNLGCATGHPSFVMSCSFTNQVLAQIELYNNKYELGVYTLPKHLDEKVAALHLEQLGVRLTKLNQKQADYLGVPLNGPFKPENYRY.

The substrate site is built by Thr62, Asp136, and Glu161. Position 162–164 (162–164) interacts with NAD(+); it reads TTT. Substrate-binding residues include Lys191 and Asp195. Residues Asn196, 225–230, Glu248, Asn283, 304–306, and Asn352 contribute to the NAD(+) site; these read GFGDVG and IGH.

The protein belongs to the adenosylhomocysteinase family. NAD(+) serves as cofactor.

The protein localises to the cytoplasm. It carries out the reaction S-adenosyl-L-homocysteine + H2O = L-homocysteine + adenosine. The protein operates within amino-acid biosynthesis; L-homocysteine biosynthesis; L-homocysteine from S-adenosyl-L-homocysteine: step 1/1. Functionally, may play a key role in the regulation of the intracellular concentration of adenosylhomocysteine. The polypeptide is Adenosylhomocysteinase (Leptospira borgpetersenii serovar Hardjo-bovis (strain JB197)).